Consider the following 364-residue polypeptide: Methylthioribose-1-phosphate isomerase (364 aa).

D254 (proton donor) is an active-site residue.

The protein belongs to the eIF-2B alpha/beta/delta subunits family. MtnA subfamily.

It is found in the cytoplasm. The protein localises to the nucleus. The catalysed reaction is 5-(methylsulfanyl)-alpha-D-ribose 1-phosphate = 5-(methylsulfanyl)-D-ribulose 1-phosphate. The protein operates within amino-acid biosynthesis; L-methionine biosynthesis via salvage pathway; L-methionine from S-methyl-5-thio-alpha-D-ribose 1-phosphate: step 1/6. Functionally, catalyzes the interconversion of methylthioribose-1-phosphate (MTR-1-P) into methylthioribulose-1-phosphate (MTRu-1-P). The sequence is that of Methylthioribose-1-phosphate isomerase from Drosophila ananassae (Fruit fly).